We begin with the raw amino-acid sequence, 984 residues long: Glutamate [NMDA] receptor subunit 1 (984 aa).

An N-terminal signal peptide occupies residues 1–24; the sequence is MAAAFAYRWLLCAAGIVNVLPIGA. The Extracellular portion of the chain corresponds to 25-570; sequence QRHTASDNPS…TLVSFLQPFS (546 aa). 7 N-linked (GlcNAc...) asparagine glycosylation sites follow: asparagine 255, asparagine 311, asparagine 342, asparagine 394, asparagine 451, asparagine 478, and asparagine 498. Glycine is bound by residues 527 to 529 and arginine 534; that span reads PLT. Residues 571-591 form a helical membrane-spanning segment; the sequence is NTLWILVMVSVHVVALVLYLL. Residues 592–648 lie on the Cytoplasmic side of the membrane; that stretch reads DRFSPFGRFKLSHSDSNEEKALNLSSAVWFAWGVLLNSGIGEGTPRSFSARVLGMVW. A helical membrane pass occupies residues 649-669; the sequence is AGFAMIIVASYTANLAAFLVL. The Extracellular segment spans residues 670–828; the sequence is ERPKTKLSGI…KTPNTLGLKN (159 aa). N-linked (GlcNAc...) asparagine glycosylation occurs at asparagine 690. Positions 700 and 744 each coordinate glycine. Residues 829 to 849 traverse the membrane as a helical segment; the sequence is MAGVFILVGVGIAGGVGLIII. Topologically, residues 850–984 are cytoplasmic; it reads EVIYKKHQVK…YTSDVSHLVV (135 aa). The interval 947 to 984 is disordered; it reads KSGLVPPALGLGKTRPQQNPLPPRYSPGYTSDVSHLVV. The span at 974–984 shows a compositional bias: polar residues; the sequence is GYTSDVSHLVV.

The protein belongs to the glutamate-gated ion channel (TC 1.A.10.1) family. Forms a heteromeric NMDA channel with Nmdar2.

The protein localises to the cell membrane. It localises to the postsynaptic cell membrane. It is found in the postsynaptic density. NMDA receptor subtype of glutamate-gated ion channels with high calcium permeability and voltage-dependent sensitivity to magnesium. Mediated by glycine. This protein plays a key role in synaptic plasticity, synaptogenesis, excitotoxicity, memory acquisition and learning. It mediates neuronal functions in glutamate neurotransmission. Is involved in the cell surface targeting of NMDA receptors. Plays a role in associative learning and in long-term memory consolidation. This Drosophila virilis (Fruit fly) protein is Glutamate [NMDA] receptor subunit 1.